An 81-amino-acid chain; its full sequence is Cortexin-3 (81 aa).

The helical transmembrane segment at 29 to 49 (MTFVFVILLFIFLGILIVRCF) threads the bilayer.

It belongs to the cortexin family.

The protein localises to the membrane. This Homo sapiens (Human) protein is Cortexin-3 (CTXN3).